The following is a 120-amino-acid chain: Secreted RxLR effector protein 29 (120 aa).

Positions 1 to 21 (MRRTAFIVLSLVALIAPCVTS) are cleaved as a signal peptide. The RxLR-dEER motif lies at 47 to 64 (RHLRSEANGRLAVVDEEK).

It belongs to the RxLR effector family.

The protein localises to the secreted. It localises to the host cytoplasm. It is found in the host nucleus. In terms of biological role, effector that acts as a broad suppressor of cell death to interrupt plant immunity. Inhibits cell death induced by cell death-inducing proteins, including the PAMP elicitor INF1 from P.infestans. The sequence is that of Secreted RxLR effector protein 29 from Plasmopara viticola (Downy mildew of grapevine).